The chain runs to 299 residues: Protoheme IX farnesyltransferase (299 aa).

9 consecutive transmembrane segments (helical) span residues 29–49, 51–71, 100–120, 123–143, 150–170, 177–197, 223–243, 244–264, and 275–295; these read VVTL…PGAV, LQPL…AAAM, HAAT…YWLV, LTAW…TAYL, NIVI…TAVT, GLLL…ALAI, CIFL…LVGM, SGAL…YKAW, and AMDV…LLLV.

The protein belongs to the UbiA prenyltransferase family. Protoheme IX farnesyltransferase subfamily.

It is found in the cell inner membrane. The catalysed reaction is heme b + (2E,6E)-farnesyl diphosphate + H2O = Fe(II)-heme o + diphosphate. It participates in porphyrin-containing compound metabolism; heme O biosynthesis; heme O from protoheme: step 1/1. Its function is as follows. Converts heme B (protoheme IX) to heme O by substitution of the vinyl group on carbon 2 of heme B porphyrin ring with a hydroxyethyl farnesyl side group. The protein is Protoheme IX farnesyltransferase of Shewanella amazonensis (strain ATCC BAA-1098 / SB2B).